Consider the following 288-residue polypeptide: MSSSMWYIMQSIQSKYSLSERLIRTIAAIRSFPHDNVEDLIRGGADVNCTHGTLKPLHCACMVSDADCVELLLEKGAEVNALDGYNRTVLHYAAEKDEACVEVLLEYGANPNALDGNRDTPLHWAAFKNNAECVRALLESGASVNALDYNNDTPLSWAAMKGNLESVSILLDYGAEVRVINLIGQTPISRLVALLVRGLGTEKEDSCFELLHRAVGHFELRKNGTMPREVARDPQLCEKLTVLCSAPGTLKTLARYAVRRSLGLQYLPDAVKGLPLPASLKEYLLLLE.

A Phosphoserine modification is found at Ser-17. 4 ANK repeats span residues 52 to 81 (GTLK…EVNA), 85 to 113 (YNRT…NPNA), 117 to 146 (NRDT…SVNA), and 150 to 179 (NNDT…EVRV). In terms of domain architecture, SOCS box spans 235 to 288 (QLCEKLTVLCSAPGTLKTLARYAVRRSLGLQYLPDAVKGLPLPASLKEYLLLLE).

Belongs to the ankyrin SOCS box (ASB) family. As to quaternary structure, interacts with TBK1; this interaction promotes TBK1 proteasomal degradation. Post-translationally, phosphorylated by TBK1.

It localises to the cytoplasm. Its pathway is protein modification; protein ubiquitination. May be a substrate-recognition component of a SCF-like ECS (Elongin-Cullin-SOCS-box protein) E3 ubiquitin-protein ligase complex which mediates the ubiquitination and subsequent proteasomal degradation of target proteins. Inhibits IFN-beta production through the IRF3 signaling pathway by targeting TBK1 via 'Lys-48'-linked ubiquitination, leading to its proteasomal degradation. The sequence is that of Ankyrin repeat and SOCS box protein 8 (ASB8) from Macaca fascicularis (Crab-eating macaque).